The chain runs to 304 residues: D-alanine--D-alanine ligase (304 aa).

The 199-residue stretch at 103-301 (KQVWLALGLP…FDDLVWRILE (199 aa)) folds into the ATP-grasp domain. 132–187 (VEMLGFPVIIKPAKEGSSVGVSRVFALEHLEEAVALAARYEGELLMEQLIEGDELT) contacts ATP. Mg(2+)-binding residues include aspartate 254, glutamate 268, and asparagine 270.

Belongs to the D-alanine--D-alanine ligase family. Mg(2+) serves as cofactor. The cofactor is Mn(2+).

The protein resides in the cytoplasm. It carries out the reaction 2 D-alanine + ATP = D-alanyl-D-alanine + ADP + phosphate + H(+). It functions in the pathway cell wall biogenesis; peptidoglycan biosynthesis. Its function is as follows. Cell wall formation. This is D-alanine--D-alanine ligase from Xylella fastidiosa (strain Temecula1 / ATCC 700964).